The primary structure comprises 84 residues: MAHKKAGGSTRNGRDSESKRLGVKRFGGESVLAGNIIVRQRGTKFHAGVNVGIGRDHTLFALSDGKVKFEVKGPNNRKFISIEA.

A disordered region spans residues 1–22 (MAHKKAGGSTRNGRDSESKRLG).

This sequence belongs to the bacterial ribosomal protein bL27 family.

The polypeptide is Large ribosomal subunit protein bL27 (Shewanella denitrificans (strain OS217 / ATCC BAA-1090 / DSM 15013)).